The following is a 468-amino-acid chain: Citrate synthase, mitochondrial (468 aa).

The transit peptide at 1 to 30 (MSLISAGRVCARILGAKNSPCALIAARQAS) directs the protein to the mitochondrion. Residues His-303 and His-349 contribute to the active site. Position 358 (Arg-358) interacts with oxaloacetate. Asp-404 is an active-site residue. The oxaloacetate site is built by Arg-430 and Arg-450.

The protein belongs to the citrate synthase family. Homodimer.

Its subcellular location is the mitochondrion matrix. It catalyses the reaction oxaloacetate + acetyl-CoA + H2O = citrate + CoA + H(+). The protein operates within carbohydrate metabolism; tricarboxylic acid cycle; isocitrate from oxaloacetate: step 1/2. Key enzyme of the Krebs tricarboxylic acid cycle which catalyzes the synthesis of citrate from acetyl coenzyme A and oxaloacetate. This is Citrate synthase, mitochondrial (cs) from Xenopus laevis (African clawed frog).